Reading from the N-terminus, the 199-residue chain is VAMP-like protein YKT62 (199 aa).

The 125-residue stretch at 7–131 (LVLKCDPETR…PYLKEASDKF (125 aa)) folds into the Longin domain. Residues 139 to 199 (KLLKIQRELD…KKTNSCCTLL (61 aa)) form the v-SNARE coiled-coil homology domain. The S-palmitoyl cysteine moiety is linked to residue cysteine 195. Cysteine 196 carries the cysteine methyl ester modification. A lipid anchor (S-geranylgeranyl cysteine) is attached at cysteine 196. Positions 197-199 (TLL) are cleaved as a propeptide — removed in mature form.

Belongs to the synaptobrevin family. In terms of assembly, interacts with SYP41. Core constituent of the SNARE complex required for membrane fusion at the trans-Golgi network.

Its subcellular location is the cell membrane. Functionally, involved in the secretory pathway. Essential for membrane fusion mediated by either SYP41 or SYP61; triggers the fusion of phospholipid vesicles containing SYP41 or SYP61 and VTI12. This Arabidopsis thaliana (Mouse-ear cress) protein is VAMP-like protein YKT62.